A 346-amino-acid chain; its full sequence is 2,5-dichlorohydroquinone reductive dechlorinase (346 aa).

The region spanning 43 to 154 is the GST N-terminal domain; that stretch reads PRFELFHFVF…YLCDALSGGT (112 aa). In terms of domain architecture, GST C-terminal spans 189–335; sequence DRRPESMQAV…AIIQWPGHPP (147 aa).

This sequence belongs to the GST superfamily.

The catalysed reaction is 2,5-dichlorohydroquinone + 2 glutathione = chlorohydroquinone + glutathione disulfide + chloride + H(+). The enzyme catalyses chlorohydroquinone + 2 glutathione = hydroquinone + glutathione disulfide + chloride + H(+). It participates in xenobiotic degradation; gamma-hexachlorocyclohexane degradation. Its function is as follows. Catalyzes the degradation of 2,5-dichlorohydroquinone (2,5-DCHQ) into hydroquinone (HQ) via chlorohydroquinone (CHQ). Is involved in the degradation pathway that allows S.japonicum UT26 to grow on gamma-hexachlorocyclohexane (gamma-HCH or lindane) as the sole source of carbon and energy. However, the conversion of CHQ to HQ by LinD seems not to be essential for this degradation pathway, because the conversion rate of CHQ to HQ is much lower than that of 2,5-DCHQ to CHQ. CHQ is more efficiently degraded by LinE in strain UT26. The chain is 2,5-dichlorohydroquinone reductive dechlorinase from Sphingobium indicum (strain DSM 16413 / CCM 7287 / MTCC 6362 / UT26 / NBRC 101211 / UT26S) (Sphingobium japonicum).